A 536-amino-acid chain; its full sequence is Membrane protein insertase YidC (536 aa).

The next 5 helical transmembrane spans lie at 7 to 27 (LLVMGLLLVSFLIFTQWQQDF), 332 to 352 (FWLLIFIHSIIGNWGLAIMGV), 411 to 431 (MGGCLPLILQMPIFIALYWTF), 449 to 469 (LSAQDPYYIFPVLMGLSMFLL), and 488 to 508 (FMPVIFTVFFLWFPSGLVLYW).

It belongs to the OXA1/ALB3/YidC family. Type 1 subfamily. In terms of assembly, interacts with the Sec translocase complex via SecD. Specifically interacts with transmembrane segments of nascent integral membrane proteins during membrane integration.

Its subcellular location is the cell inner membrane. In terms of biological role, required for the insertion and/or proper folding and/or complex formation of integral membrane proteins into the membrane. Involved in integration of membrane proteins that insert both dependently and independently of the Sec translocase complex, as well as at least some lipoproteins. Aids folding of multispanning membrane proteins. This chain is Membrane protein insertase YidC, found in Haemophilus ducreyi (strain 35000HP / ATCC 700724).